A 122-amino-acid polypeptide reads, in one-letter code: Large ribosomal subunit protein uL18 (122 aa).

Belongs to the universal ribosomal protein uL18 family. In terms of assembly, part of the 50S ribosomal subunit; part of the 5S rRNA/L5/L18/L25 subcomplex. Contacts the 5S and 23S rRNAs.

This is one of the proteins that bind and probably mediate the attachment of the 5S RNA into the large ribosomal subunit, where it forms part of the central protuberance. The polypeptide is Large ribosomal subunit protein uL18 (Prochlorococcus marinus (strain MIT 9515)).